The following is a 61-amino-acid chain: Large ribosomal subunit protein bL28 (61 aa).

Residues 1 to 26 (MAKDFVTGKHTRFGNTRSHALNHSRR) are disordered.

It belongs to the bacterial ribosomal protein bL28 family.

This is Large ribosomal subunit protein bL28 from Pediococcus pentosaceus (strain ATCC 25745 / CCUG 21536 / LMG 10740 / 183-1w).